A 498-amino-acid polypeptide reads, in one-letter code: Protein YhjJ (498 aa).

The first 24 residues, 1 to 24, serve as a signal peptide directing secretion; it reads MQGTKIRLLAGGLLMMATAGYVQA.

This sequence belongs to the peptidase M16 family.

It localises to the periplasm. This Escherichia coli (strain K12) protein is Protein YhjJ (yhjJ).